Here is a 527-residue protein sequence, read N- to C-terminus: Peptide chain release factor 3 (527 aa).

Residues 9–278 form the tr-type G domain; it reads NKRRTFAIIS…GLTQWAPKPQ (270 aa). GTP is bound by residues 18 to 25, 86 to 90, and 140 to 143; these read SHPDAGKT, DTPGH, and NKLD.

Belongs to the TRAFAC class translation factor GTPase superfamily. Classic translation factor GTPase family. PrfC subfamily.

It is found in the cytoplasm. Its function is as follows. Increases the formation of ribosomal termination complexes and stimulates activities of RF-1 and RF-2. It binds guanine nucleotides and has strong preference for UGA stop codons. It may interact directly with the ribosome. The stimulation of RF-1 and RF-2 is significantly reduced by GTP and GDP, but not by GMP. The sequence is that of Peptide chain release factor 3 from Haemophilus influenzae (strain PittGG).